Here is a 208-residue protein sequence, read N- to C-terminus: MLKPLSQLVCALPLVVAASSYADDSAALKDKLAKLDNLKANFSQQVTDVNNKVIQQGTGTFALAVPNQFYWHLTQPDESLIVADGRDVWIYNPFAEEVSVLDFNQAINASPIALLVHRDDATWQAYQVKRQDDCYQITPKAVDASVTGVEVCFKDEQLEVMKLTDQQGNLSVFNLSAQAPLKDADASLFQFTVPEGVDIDDQRLKALD.

Positions 1–22 (MLKPLSQLVCALPLVVAASSYA) are cleaved as a signal peptide.

This sequence belongs to the LolA family. In terms of assembly, monomer.

It is found in the periplasm. In terms of biological role, participates in the translocation of lipoproteins from the inner membrane to the outer membrane. Only forms a complex with a lipoprotein if the residue after the N-terminal Cys is not an aspartate (The Asp acts as a targeting signal to indicate that the lipoprotein should stay in the inner membrane). The chain is Outer-membrane lipoprotein carrier protein from Shewanella loihica (strain ATCC BAA-1088 / PV-4).